Consider the following 134-residue polypeptide: Phosphoribosyl-ATP pyrophosphatase 2 (134 aa).

It belongs to the PRA-PH family.

It is found in the cytoplasm. It catalyses the reaction 1-(5-phospho-beta-D-ribosyl)-ATP + H2O = 1-(5-phospho-beta-D-ribosyl)-5'-AMP + diphosphate + H(+). The protein operates within amino-acid biosynthesis; L-histidine biosynthesis; L-histidine from 5-phospho-alpha-D-ribose 1-diphosphate: step 2/9. The protein is Phosphoribosyl-ATP pyrophosphatase 2 (hisE2) of Bradyrhizobium diazoefficiens (strain JCM 10833 / BCRC 13528 / IAM 13628 / NBRC 14792 / USDA 110).